We begin with the raw amino-acid sequence, 87 residues long: Large ribosomal subunit protein eL33 (87 aa).

The protein belongs to the eukaryotic ribosomal protein eL33 family.

The sequence is that of Large ribosomal subunit protein eL33 from Pyrococcus abyssi (strain GE5 / Orsay).